The sequence spans 539 residues: Chaperonin GroEL 2 (539 aa).

ATP is bound by residues 29-32, 86-90, G413, 477-479, and D493; these read TLGP, DGTTT, and NAA. The tract at residues 519-539 is disordered; the sequence is VVDKPEEEDSAAAGHGHGHSH.

The protein belongs to the chaperonin (HSP60) family. As to quaternary structure, forms a cylinder of 14 subunits composed of two heptameric rings stacked back-to-back. Interacts with the co-chaperonin GroES.

The protein localises to the cytoplasm. The catalysed reaction is ATP + H2O + a folded polypeptide = ADP + phosphate + an unfolded polypeptide.. In terms of biological role, together with its co-chaperonin GroES, plays an essential role in assisting protein folding. The GroEL-GroES system forms a nano-cage that allows encapsulation of the non-native substrate proteins and provides a physical environment optimized to promote and accelerate protein folding. The polypeptide is Chaperonin GroEL 2 (Saccharopolyspora erythraea (strain ATCC 11635 / DSM 40517 / JCM 4748 / NBRC 13426 / NCIMB 8594 / NRRL 2338)).